The following is a 322-amino-acid chain: Pantothenate kinase (322 aa).

Residue 104–111 participates in ATP binding; sequence GSVAVGKS.

The protein belongs to the prokaryotic pantothenate kinase family.

Its subcellular location is the cytoplasm. It carries out the reaction (R)-pantothenate + ATP = (R)-4'-phosphopantothenate + ADP + H(+). Its pathway is cofactor biosynthesis; coenzyme A biosynthesis; CoA from (R)-pantothenate: step 1/5. The chain is Pantothenate kinase from Leifsonia xyli subsp. xyli (strain CTCB07).